The sequence spans 496 residues: Aspartyl/glutamyl-tRNA(Asn/Gln) amidotransferase subunit B (496 aa).

Belongs to the GatB/GatE family. GatB subfamily. As to quaternary structure, heterotrimer of A, B and C subunits.

It catalyses the reaction L-glutamyl-tRNA(Gln) + L-glutamine + ATP + H2O = L-glutaminyl-tRNA(Gln) + L-glutamate + ADP + phosphate + H(+). The enzyme catalyses L-aspartyl-tRNA(Asn) + L-glutamine + ATP + H2O = L-asparaginyl-tRNA(Asn) + L-glutamate + ADP + phosphate + 2 H(+). Allows the formation of correctly charged Asn-tRNA(Asn) or Gln-tRNA(Gln) through the transamidation of misacylated Asp-tRNA(Asn) or Glu-tRNA(Gln) in organisms which lack either or both of asparaginyl-tRNA or glutaminyl-tRNA synthetases. The reaction takes place in the presence of glutamine and ATP through an activated phospho-Asp-tRNA(Asn) or phospho-Glu-tRNA(Gln). This Prochlorococcus marinus (strain MIT 9303) protein is Aspartyl/glutamyl-tRNA(Asn/Gln) amidotransferase subunit B.